Consider the following 189-residue polypeptide: MANYSTNDFKPGLKVMLDSNPCSIMENEYVKPGKGQAFNRVKLRNLKTGKVLEKTFKSGDTLEAADIVEVEMNYLYNDGEMWHFMDPESFEQIAADKTAMGDAAKWLKDDSNETCTIMLFNGVPLNVNAPNFVVLKVVETDPGVRGDTSGGGGKPAKLETGAVVRVPLFVQQEESVRVDTRTGEYLERA.

N6-(3,6-diaminohexanoyl)-5-hydroxylysine is present on Lys34.

It belongs to the elongation factor P family. Post-translationally, may be beta-lysylated on the epsilon-amino group of Lys-34 by the combined action of EpmA and EpmB, and then hydroxylated on the C5 position of the same residue by EpmC (if this protein is present). Lysylation is critical for the stimulatory effect of EF-P on peptide-bond formation. The lysylation moiety may extend toward the peptidyltransferase center and stabilize the terminal 3-CCA end of the tRNA. Hydroxylation of the C5 position on Lys-34 may allow additional potential stabilizing hydrogen-bond interactions with the P-tRNA.

The protein resides in the cytoplasm. It participates in protein biosynthesis; polypeptide chain elongation. In terms of biological role, involved in peptide bond synthesis. Alleviates ribosome stalling that occurs when 3 or more consecutive Pro residues or the sequence PPG is present in a protein, possibly by augmenting the peptidyl transferase activity of the ribosome. Modification of Lys-34 is required for alleviation. The sequence is that of Elongation factor P from Acinetobacter baumannii (strain AB307-0294).